The primary structure comprises 153 residues: Aspartate carbamoyltransferase regulatory chain (153 aa).

Residues Cys110, Cys115, Cys138, and Cys141 each contribute to the Zn(2+) site.

Belongs to the PyrI family. In terms of assembly, contains catalytic and regulatory chains. It depends on Zn(2+) as a cofactor.

Involved in allosteric regulation of aspartate carbamoyltransferase. The sequence is that of Aspartate carbamoyltransferase regulatory chain from Bacteroides fragilis (strain ATCC 25285 / DSM 2151 / CCUG 4856 / JCM 11019 / LMG 10263 / NCTC 9343 / Onslow / VPI 2553 / EN-2).